The chain runs to 223 residues: Cytidylate kinase (223 aa).

10–18 (GPASSGKST) contributes to the ATP binding site.

This sequence belongs to the cytidylate kinase family. Type 1 subfamily.

The protein localises to the cytoplasm. The catalysed reaction is CMP + ATP = CDP + ADP. It carries out the reaction dCMP + ATP = dCDP + ADP. This is Cytidylate kinase from Streptococcus pneumoniae (strain Hungary19A-6).